The following is a 1163-amino-acid chain: DNA-directed RNA polymerase subunit beta 2 (1163 aa).

The protein belongs to the RNA polymerase beta chain family. In terms of assembly, the RNAP catalytic core consists of 2 alpha, 1 beta, 1 beta' and 1 omega subunit. When a sigma factor is associated with the core the holoenzyme is formed, which can initiate transcription.

The catalysed reaction is RNA(n) + a ribonucleoside 5'-triphosphate = RNA(n+1) + diphosphate. Functionally, DNA-dependent RNA polymerase catalyzes the transcription of DNA into RNA using the four ribonucleoside triphosphates as substrates. The protein is DNA-directed RNA polymerase subunit beta 2 of Nocardia farcinica (strain IFM 10152).